Reading from the N-terminus, the 460-residue chain is 3-isopropylmalate dehydratase large subunit (460 aa).

The [4Fe-4S] cluster site is built by Cys-338, Cys-398, and Cys-401.

Belongs to the aconitase/IPM isomerase family. LeuC type 1 subfamily. In terms of assembly, heterodimer of LeuC and LeuD. Requires [4Fe-4S] cluster as cofactor.

The catalysed reaction is (2R,3S)-3-isopropylmalate = (2S)-2-isopropylmalate. It functions in the pathway amino-acid biosynthesis; L-leucine biosynthesis; L-leucine from 3-methyl-2-oxobutanoate: step 2/4. In terms of biological role, catalyzes the isomerization between 2-isopropylmalate and 3-isopropylmalate, via the formation of 2-isopropylmaleate. This Streptococcus thermophilus (strain ATCC BAA-491 / LMD-9) protein is 3-isopropylmalate dehydratase large subunit.